Reading from the N-terminus, the 215-residue chain is LexA repressor (215 aa).

The segment at residues 28-48 (RAEIAAELGFSSPNAAEEHLR) is a DNA-binding region (H-T-H motif). Active-site for autocatalytic cleavage activity residues include Ser-133 and Lys-170.

The protein belongs to the peptidase S24 family. Homodimer.

It catalyses the reaction Hydrolysis of Ala-|-Gly bond in repressor LexA.. Functionally, represses a number of genes involved in the response to DNA damage (SOS response), including recA and lexA. In the presence of single-stranded DNA, RecA interacts with LexA causing an autocatalytic cleavage which disrupts the DNA-binding part of LexA, leading to derepression of the SOS regulon and eventually DNA repair. The polypeptide is LexA repressor (Burkholderia ambifaria (strain ATCC BAA-244 / DSM 16087 / CCUG 44356 / LMG 19182 / AMMD) (Burkholderia cepacia (strain AMMD))).